A 342-amino-acid polypeptide reads, in one-letter code: Deoxyhypusine synthase regulatory subunit (342 aa).

Residues 72–76 (SNLIS), 98–100 (TAG), E104, D213, 282–283 (TG), and 316–317 (DA) contribute to the NAD(+) site.

It belongs to the deoxyhypusine synthase family. As to quaternary structure, heterotetramer formed by a homodimer of the non-catalytic regulatory subunit DHSp and a homodimer of the catalytic subunit DHSc where DHSc appears to bind spermidine and DHSp appears to bind NAD(+).

It participates in protein modification; eIF5A hypusination. Required for the activation and stability of deoxyhypusine synthase DHSc. Required for cell growth and survival. This is Deoxyhypusine synthase regulatory subunit from Trypanosoma brucei brucei (strain 927/4 GUTat10.1).